Consider the following 421-residue polypeptide: Gamma-glutamyl phosphate reductase (421 aa).

Belongs to the gamma-glutamyl phosphate reductase family.

It is found in the cytoplasm. The catalysed reaction is L-glutamate 5-semialdehyde + phosphate + NADP(+) = L-glutamyl 5-phosphate + NADPH + H(+). It functions in the pathway amino-acid biosynthesis; L-proline biosynthesis; L-glutamate 5-semialdehyde from L-glutamate: step 2/2. Its function is as follows. Catalyzes the NADPH-dependent reduction of L-glutamate 5-phosphate into L-glutamate 5-semialdehyde and phosphate. The product spontaneously undergoes cyclization to form 1-pyrroline-5-carboxylate. The protein is Gamma-glutamyl phosphate reductase of Pseudomonas savastanoi pv. phaseolicola (strain 1448A / Race 6) (Pseudomonas syringae pv. phaseolicola (strain 1448A / Race 6)).